The primary structure comprises 543 residues: CTP synthase (543 aa).

Positions 1 to 265 are amidoligase domain; that stretch reads MARYIFITGG…DDEVLAAFAI (265 aa). Residue S13 participates in CTP binding. UTP is bound at residue S13. An ATP-binding site is contributed by 14–19; sequence SLGKGL. An L-glutamine-binding site is contributed by Y54. Position 71 (D71) interacts with ATP. D71 and E139 together coordinate Mg(2+). CTP contacts are provided by residues 146 to 148, 186 to 191, and K222; these read DIE and KTKPTQ. UTP-binding positions include 186-191 and K222; that span reads KTKPTQ. 238–240 serves as a coordination point for ATP; that stretch reads RDA. Residues 291–542 enclose the Glutamine amidotransferase type-1 domain; sequence TIAIVGKYTG…IEAALVRSRL (252 aa). Residue G353 participates in L-glutamine binding. C380 functions as the Nucleophile; for glutamine hydrolysis in the catalytic mechanism. Residues 381-384, E404, and R470 each bind L-glutamine; that span reads FGMQ. Residues H515 and E517 contribute to the active site.

Belongs to the CTP synthase family. As to quaternary structure, homotetramer.

The catalysed reaction is UTP + L-glutamine + ATP + H2O = CTP + L-glutamate + ADP + phosphate + 2 H(+). The enzyme catalyses L-glutamine + H2O = L-glutamate + NH4(+). It catalyses the reaction UTP + NH4(+) + ATP = CTP + ADP + phosphate + 2 H(+). The protein operates within pyrimidine metabolism; CTP biosynthesis via de novo pathway; CTP from UDP: step 2/2. With respect to regulation, allosterically activated by GTP, when glutamine is the substrate; GTP has no effect on the reaction when ammonia is the substrate. The allosteric effector GTP functions by stabilizing the protein conformation that binds the tetrahedral intermediate(s) formed during glutamine hydrolysis. Inhibited by the product CTP, via allosteric rather than competitive inhibition. Catalyzes the ATP-dependent amination of UTP to CTP with either L-glutamine or ammonia as the source of nitrogen. Regulates intracellular CTP levels through interactions with the four ribonucleotide triphosphates. The chain is CTP synthase from Rhodopseudomonas palustris (strain BisB5).